Here is a 338-residue protein sequence, read N- to C-terminus: 1-aminocyclopropane-1-carboxylate deaminase (338 aa).

Lys51 bears the N6-(pyridoxal phosphate)lysine mark. Catalysis depends on Ser78, which acts as the Nucleophile.

The protein belongs to the ACC deaminase/D-cysteine desulfhydrase family. Homotrimer. Requires pyridoxal 5'-phosphate as cofactor.

It carries out the reaction 1-aminocyclopropane-1-carboxylate + H2O = 2-oxobutanoate + NH4(+). Catalyzes a cyclopropane ring-opening reaction, the irreversible conversion of 1-aminocyclopropane-1-carboxylate (ACC) to ammonia and alpha-ketobutyrate. Allows growth on ACC as a nitrogen source. This is 1-aminocyclopropane-1-carboxylate deaminase from Burkholderia cenocepacia (strain ATCC BAA-245 / DSM 16553 / LMG 16656 / NCTC 13227 / J2315 / CF5610) (Burkholderia cepacia (strain J2315)).